We begin with the raw amino-acid sequence, 616 residues long: FNIP repeat-containing protein DDB_G0290639 (616 aa).

Positions 239–274 (FENNNNNNNNNNNNNNNNNNNNNNNNNNNNNKKTEK) form a coiled coil. Residues 241 to 269 (NNNNNNNNNNNNNNNNNNNNNNNNNNNNN) show a composition bias toward low complexity. Positions 241–270 (NNNNNNNNNNNNNNNNNNNNNNNNNNNNNK) are disordered. FNIP repeat units follow at residues 337-379 (FEES…FNDG), 380-421 (FNQS…KLCN), 423-464 (FSQP…VFYD), 466-508 (FNQL…FSDG), 509-550 (FNQT…LIDS), and 552-593 (FQQP…ILDK).

In Dictyostelium discoideum (Social amoeba), this protein is FNIP repeat-containing protein DDB_G0290639.